We begin with the raw amino-acid sequence, 214 residues long: Large ribosomal subunit protein uL3 (214 aa).

A disordered region spans residues 129 to 157; that stretch reads FGRGPMSHGSKNHRRPGSIGAGTTPGRVF.

It belongs to the universal ribosomal protein uL3 family. As to quaternary structure, part of the 50S ribosomal subunit. Forms a cluster with proteins L14 and L19.

One of the primary rRNA binding proteins, it binds directly near the 3'-end of the 23S rRNA, where it nucleates assembly of the 50S subunit. This chain is Large ribosomal subunit protein uL3, found in Synechococcus sp. (strain JA-2-3B'a(2-13)) (Cyanobacteria bacterium Yellowstone B-Prime).